The sequence spans 984 residues: G patch domain-containing protein TGH homolog (984 aa).

Residues 130 to 144 (EHARKQASKEQKERP) are compositionally biased toward basic and acidic residues. Positions 130–153 (EHARKQASKEQKERPSAIPGPIPD) are disordered. The G-patch domain occupies 160 to 202 (TTSIGVKLLMKMGWRQGRSIRDAHADSLYESRREARKAFLALS). The SURP motif repeat unit spans residues 408-450 (LIEGCAAMVARCGKHIEDFYKEKSKTNTQFNFLNEGDGCSYYA). 4 disordered regions span residues 464–503 (QKPD…SSFP), 679–717 (TRTN…ESSS), 775–806 (LGLD…GISR), and 820–984 (ESAL…HHKR). The segment covering 473-495 (SSDKLTAENRGKILGERPLDRST) has biased composition (basic and acidic residues). Residues 679 to 695 (TRTNEVESSSIAPQHTS) are compositionally biased toward polar residues. Positions 697–709 (AGATETEAKGAAT) are enriched in low complexity. Positions 814-859 (QEIKENESALDKEEIANASADVPSDNVEELGLKYEKQEHRAEKSRS) form a coiled coil. Basic and acidic residues predominate over residues 843-858 (LGLKYEKQEHRAEKSR). Composition is skewed to basic residues over residues 882 to 892 (SRERRSRHKIR), 905 to 922 (HRSK…RRSR), and 934 to 946 (TKRK…HHRT). Basic and acidic residues predominate over residues 947 to 974 (RNPDTDSSDHEYEERHKSSSRRSSDKDR). Over residues 975–984 (SRRRSRHHKR) the composition is skewed to basic residues.

The protein localises to the nucleus. Functions as a component of microRNA (miRNA) and small interfering RNA (siRNA) biogenesis. May assist Dicer-like (DCL) proteins to efficiently process and/or recruit the precursors of miRNAs and siRNAs. The protein is G patch domain-containing protein TGH homolog of Oryza sativa subsp. japonica (Rice).